A 465-amino-acid chain; its full sequence is GTPase Der (465 aa).

EngA-type G domains are found at residues 3 to 167 (PLVA…PEEG) and 179 to 352 (VRIA…ASAT). GTP is bound by residues 9–16 (GRPNVGKS), 57–61 (DTGGI), 119–122 (NKID), 185–192 (GRPNVGKS), 232–236 (DTAGL), and 297–300 (NKWD). The KH-like domain maps to 353–437 (HEFSTSEVNQ…PVCFIFREGA (85 aa)).

Belongs to the TRAFAC class TrmE-Era-EngA-EngB-Septin-like GTPase superfamily. EngA (Der) GTPase family. Associates with the 50S ribosomal subunit.

GTPase that plays an essential role in the late steps of ribosome biogenesis. The chain is GTPase Der from Xanthomonas oryzae pv. oryzae (strain MAFF 311018).